The sequence spans 229 residues: Large ribosomal subunit protein uL1 (229 aa).

This sequence belongs to the universal ribosomal protein uL1 family. As to quaternary structure, part of the 50S ribosomal subunit.

Its function is as follows. Binds directly to 23S rRNA. The L1 stalk is quite mobile in the ribosome, and is involved in E site tRNA release. Functionally, protein L1 is also a translational repressor protein, it controls the translation of the L11 operon by binding to its mRNA. The chain is Large ribosomal subunit protein uL1 from Listeria monocytogenes serovar 1/2a (strain ATCC BAA-679 / EGD-e).